The sequence spans 282 residues: Lipoyl synthase (282 aa).

Positions 37, 42, 48, 63, 67, 70, and 275 each coordinate [4Fe-4S] cluster. The Radical SAM core domain occupies 49–264 (WSRGTATFMI…RLVGIEKGFR (216 aa)).

Belongs to the radical SAM superfamily. Lipoyl synthase family. It depends on [4Fe-4S] cluster as a cofactor.

Its subcellular location is the cytoplasm. The catalysed reaction is [[Fe-S] cluster scaffold protein carrying a second [4Fe-4S](2+) cluster] + N(6)-octanoyl-L-lysyl-[protein] + 2 oxidized [2Fe-2S]-[ferredoxin] + 2 S-adenosyl-L-methionine + 4 H(+) = [[Fe-S] cluster scaffold protein] + N(6)-[(R)-dihydrolipoyl]-L-lysyl-[protein] + 4 Fe(3+) + 2 hydrogen sulfide + 2 5'-deoxyadenosine + 2 L-methionine + 2 reduced [2Fe-2S]-[ferredoxin]. It participates in protein modification; protein lipoylation via endogenous pathway; protein N(6)-(lipoyl)lysine from octanoyl-[acyl-carrier-protein]: step 2/2. Catalyzes the radical-mediated insertion of two sulfur atoms into the C-6 and C-8 positions of the octanoyl moiety bound to the lipoyl domains of lipoate-dependent enzymes, thereby converting the octanoylated domains into lipoylated derivatives. This Porphyromonas gingivalis (strain ATCC BAA-308 / W83) protein is Lipoyl synthase.